A 105-amino-acid polypeptide reads, in one-letter code: Serine protease inhibitor Kazal-type 6 (105 aa).

The signal sequence occupies residues 1 to 23; that stretch reads MKVAGVFLLLSLALLCFFSGAFS. Pyrrolidone carboxylic acid is present on Gln-24. The region spanning 49-105 is the Kazal-like domain; it reads RLFQINCGEFRDPKVFCTRESDPLCGSDGQTYGNKCAFCKALEKSSGKINLKHRGKC. 3 disulfides stabilise this stretch: Cys-55-Cys-87, Cys-65-Cys-84, and Cys-73-Cys-105.

In terms of tissue distribution, expressed in the upper epidermis and in skin appendages.

Its subcellular location is the secreted. Serine protease inhibitor selective for kallikreins. Efficiently inhibits KLK5 and human KLK2, KLK4, KLK5, KLK6, KLK7, KLK12, KLK13 and KLK14. Doesn't inhibit human KLK1 and KLK8. The chain is Serine protease inhibitor Kazal-type 6 (Spink6) from Mus musculus (Mouse).